A 349-amino-acid chain; its full sequence is Glycerol-3-phosphate dehydrogenase [NAD(+)], cytoplasmic (349 aa).

10 to 15 (GSGNWG) contacts NAD(+). Lysine 120 contributes to the substrate binding site. Alanine 153 lines the NAD(+) pocket. Lysine 204 functions as the Proton acceptor in the catalytic mechanism. Arginine 269 contacts NAD(+). 269 to 270 (RN) provides a ligand contact to substrate. Lysine 289 carries the N6-succinyllysine modification. Residues lysine 296 and glutamine 298 each coordinate NAD(+). Position 326 is a phosphotyrosine (tyrosine 326).

It belongs to the NAD-dependent glycerol-3-phosphate dehydrogenase family. Homodimer.

The protein resides in the cytoplasm. It carries out the reaction sn-glycerol 3-phosphate + NAD(+) = dihydroxyacetone phosphate + NADH + H(+). In terms of biological role, has glycerol-3-phosphate dehydrogenase activity. The sequence is that of Glycerol-3-phosphate dehydrogenase [NAD(+)], cytoplasmic (GPD1) from Bos taurus (Bovine).